The chain runs to 317 residues: DNA-directed RNA polymerase subunit alpha 2 (317 aa).

The alpha N-terminal domain (alpha-NTD) stretch occupies residues Met-1 to Glu-227. Residues Ile-241–Leu-317 are alpha C-terminal domain (alpha-CTD).

The protein belongs to the RNA polymerase alpha chain family. As to quaternary structure, homodimer. The RNAP catalytic core consists of 2 alpha, 1 beta, 1 beta' and 1 omega subunit. When a sigma factor is associated with the core the holoenzyme is formed, which can initiate transcription.

It catalyses the reaction RNA(n) + a ribonucleoside 5'-triphosphate = RNA(n+1) + diphosphate. DNA-dependent RNA polymerase catalyzes the transcription of DNA into RNA using the four ribonucleoside triphosphates as substrates. This Francisella tularensis subsp. holarctica (strain LVS) protein is DNA-directed RNA polymerase subunit alpha 2.